A 435-amino-acid polypeptide reads, in one-letter code: Enolase (435 aa).

2 residues coordinate substrate: H155 and E164. Residue E205 is the Proton donor of the active site. Residues D243, E292, and D319 each coordinate Mg(2+). Residues E292, D319, K344, 371-374 (SHRS), and K395 each bind substrate. K344 acts as the Proton acceptor in catalysis.

It belongs to the enolase family. As to quaternary structure, homooctamer. Requires Mg(2+) as cofactor.

Its subcellular location is the cytoplasm. It localises to the secreted. It is found in the cell surface. It carries out the reaction (2R)-2-phosphoglycerate = phosphoenolpyruvate + H2O. Its pathway is carbohydrate degradation; glycolysis; pyruvate from D-glyceraldehyde 3-phosphate: step 4/5. Its function is as follows. Catalyzes the reversible conversion of 2-phosphoglycerate (2-PG) into phosphoenolpyruvate (PEP). It is essential for the degradation of carbohydrates via glycolysis. 'Moonlights' as a plasminogen receptor and plasmin activator. Binds host (human) plasminogen in vitro; enhances the activity of host tissue-specific plasminogen activator (tPA). In Streptococcus pyogenes serotype M1, this protein is Enolase.